Here is a 199-residue protein sequence, read N- to C-terminus: Probable thymidylate kinase (199 aa).

9-16 lines the ATP pocket; sequence GIDGCGKT.

This sequence belongs to the thymidylate kinase family.

It catalyses the reaction dTMP + ATP = dTDP + ADP. This Methanococcus maripaludis (strain DSM 14266 / JCM 13030 / NBRC 101832 / S2 / LL) protein is Probable thymidylate kinase.